The primary structure comprises 260 residues: Voltage-dependent calcium channel gamma-6 subunit (260 aa).

The interval 14–33 (RRGAAGRRRAHGQGRSGLTP) is disordered. A compositionally biased stretch (basic residues) spans 15–25 (RGAAGRRRAHG). The next 4 membrane-spanning stretches (helical) occupy residues 43-63 (LLLA…EFWV), 143-163 (VIAV…IMVL), 169-189 (FLLR…LVSL), and 221-241 (LGCG…FLLL).

This sequence belongs to the PMP-22/EMP/MP20 family. CACNG subfamily. In terms of assembly, interacts with CACNA1C. Identified in a complex with the L-type calcium channel subunits CACNA1C, CACNA2D1 and either CACNB1 or CACNB2. Detected in heart left ventricle.

Its subcellular location is the cell membrane. Its function is as follows. Regulates the activity of L-type calcium channels that contain CACNA1C as pore-forming subunit. The polypeptide is Voltage-dependent calcium channel gamma-6 subunit (CACNG6) (Homo sapiens (Human)).